The sequence spans 337 residues: Glyceraldehyde-3-phosphate dehydrogenase (337 aa).

NAD(+)-binding positions include 12 to 13 (RI), Asp-34, and Arg-79. D-glyceraldehyde 3-phosphate is bound by residues 150-152 (SCT), Thr-181, 210-211 (TG), and Arg-233. Cys-151 serves as the catalytic Nucleophile. Asn-315 contacts NAD(+).

It belongs to the glyceraldehyde-3-phosphate dehydrogenase family. In terms of assembly, homotetramer.

The protein localises to the cytoplasm. It catalyses the reaction D-glyceraldehyde 3-phosphate + phosphate + NAD(+) = (2R)-3-phospho-glyceroyl phosphate + NADH + H(+). It functions in the pathway carbohydrate degradation; glycolysis; pyruvate from D-glyceraldehyde 3-phosphate: step 1/5. The chain is Glyceraldehyde-3-phosphate dehydrogenase (GPD) from Ajellomyces capsulatus (Darling's disease fungus).